Consider the following 249-residue polypeptide: MSMPFYVSPEQIMKDKADYARKGIARGRSAVVLQYEGGILFVADNVSRTLHKISELYDRVAFAAVGRYNEFENLRLAGVRFADMHGYTYDRSDVTGQMLANAYAQTLGAVFTESSKPWEVEIVVAEVGDSPDSDQIYRITFDGSVVDERDFLAMGGSAERVTAALRERYVKNMSLTDALRVAVHGLAHENGERRELKASSLEVAMLERSRPHRKFRRIQGERLARMLQEAREAEEAAEAQSSEDGGATD.

The segment at 229–249 (EAREAEEAAEAQSSEDGGATD) is disordered.

The protein belongs to the peptidase T1A family. In terms of assembly, the 20S proteasome core is composed of 14 alpha and 14 beta subunits that assemble into four stacked heptameric rings, resulting in a barrel-shaped structure. The two inner rings, each composed of seven catalytic beta subunits, are sandwiched by two outer rings, each composed of seven alpha subunits. The catalytic chamber with the active sites is on the inside of the barrel. Has a gated structure, the ends of the cylinder being occluded by the N-termini of the alpha-subunits. Is capped by the proteasome-associated ATPase, ARC.

It is found in the cytoplasm. It participates in protein degradation; proteasomal Pup-dependent pathway. With respect to regulation, the formation of the proteasomal ATPase ARC-20S proteasome complex, likely via the docking of the C-termini of ARC into the intersubunit pockets in the alpha-rings, may trigger opening of the gate for substrate entry. Interconversion between the open-gate and close-gate conformations leads to a dynamic regulation of the 20S proteasome proteolysis activity. Component of the proteasome core, a large protease complex with broad specificity involved in protein degradation. In Thermobifida fusca (strain YX), this protein is Proteasome subunit alpha.